The sequence spans 288 residues: Homoserine kinase (288 aa).

78–88 (PLARGLGSSSS) contributes to the ATP binding site.

This sequence belongs to the GHMP kinase family. Homoserine kinase subfamily.

The protein resides in the cytoplasm. The enzyme catalyses L-homoserine + ATP = O-phospho-L-homoserine + ADP + H(+). Its pathway is amino-acid biosynthesis; L-threonine biosynthesis; L-threonine from L-aspartate: step 4/5. Its function is as follows. Catalyzes the ATP-dependent phosphorylation of L-homoserine to L-homoserine phosphate. The sequence is that of Homoserine kinase from Streptococcus agalactiae serotype III (strain NEM316).